A 38-amino-acid chain; its full sequence is MQVNDLGFVASILFVLVPTVFLLILYIQTASRQGGKDS.

A helical membrane pass occupies residues Gly-7–Ile-27.

This sequence belongs to the PsbM family. As to quaternary structure, PSII is composed of 1 copy each of membrane proteins PsbA, PsbB, PsbC, PsbD, PsbE, PsbF, PsbH, PsbI, PsbJ, PsbK, PsbL, PsbM, PsbT, PsbX, PsbY, PsbZ, Psb30/Ycf12, peripheral proteins PsbO, CyanoQ (PsbQ), PsbU, PsbV and a large number of cofactors. It forms dimeric complexes.

Its subcellular location is the cellular thylakoid membrane. Its function is as follows. One of the components of the core complex of photosystem II (PSII). PSII is a light-driven water:plastoquinone oxidoreductase that uses light energy to abstract electrons from H(2)O, generating O(2) and a proton gradient subsequently used for ATP formation. It consists of a core antenna complex that captures photons, and an electron transfer chain that converts photonic excitation into a charge separation. This subunit is found at the monomer-monomer interface. This chain is Photosystem II reaction center protein M, found in Nostoc punctiforme (strain ATCC 29133 / PCC 73102).